The following is a 349-amino-acid chain: Flap endonuclease 1 (349 aa).

The tract at residues 1-98 (MDLADLVKDV…EELERRRKAK (98 aa)) is N-domain. Residues Asp27, Asp80, Glu152, Glu154, Asp173, Asp175, and Asp236 each contribute to the Mg(2+) site. Residues 116 to 258 (ELRKYSQAIL…RALKIIKKYG (143 aa)) are I-domain. Residues 341-349 (RQTGLDRWF) are interaction with PCNA.

This sequence belongs to the XPG/RAD2 endonuclease family. FEN1 subfamily. As to quaternary structure, interacts with PCNA via subunit PCNA1. Mg(2+) serves as cofactor.

Its activity is regulated as follows. Heterotrimeric PCNA stimulates the nuclease activity without altering cleavage specificity. In terms of biological role, structure-specific nuclease with 5'-flap endonuclease and 5'-3' exonuclease activities involved in DNA replication and repair. During DNA replication, cleaves the 5'-overhanging flap structure that is generated by displacement synthesis when DNA polymerase encounters the 5'-end of a downstream Okazaki fragment. Binds the unpaired 3'-DNA end and kinks the DNA to facilitate 5' cleavage specificity. Cleaves one nucleotide into the double-stranded DNA from the junction in flap DNA, leaving a nick for ligation. Also involved in the base excision repair (BER) pathway. Acts as a genome stabilization factor that prevents flaps from equilibrating into structures that lead to duplications and deletions. Also possesses 5'-3' exonuclease activity on nicked or gapped double-stranded DNA. DNA polymerase I, DNA ligase and the flap endonuclease may be constitutively associated with the PCNA heterotrimer forming a scanning complex able to couple DNA synthesis and Okazaki fragment maturation. The protein is Flap endonuclease 1 of Saccharolobus solfataricus (strain ATCC 35092 / DSM 1617 / JCM 11322 / P2) (Sulfolobus solfataricus).